Here is a 240-residue protein sequence, read N- to C-terminus: Homeobox protein goosecoid (240 aa).

The segment at residues 146-205 (KRRHRTIFTDEQLEALENLFQETKYPDVGTREQLARKVHLREEKVEVWFKNRRAKWRRQK) is a DNA-binding region (homeobox). The tract at residues 199–240 (AKWRRQKRSSSEESENSQKWNKSTKTTSEKIEEGKSDVDSDS) is disordered. The segment covering 225-240 (TSEKIEEGKSDVDSDS) has biased composition (basic and acidic residues).

It belongs to the paired homeobox family. Bicoid subfamily.

The protein localises to the nucleus. This Danio rerio (Zebrafish) protein is Homeobox protein goosecoid (gsc).